A 209-amino-acid chain; its full sequence is Endoplasmic reticulum vesicle protein 25 (209 aa).

An N-terminal signal peptide occupies residues 1–18 (MKYTTFGIISLFLSVTWA). The Lumenal segment spans residues 19–178 (LRFELAASFE…TNESTNRRVR (160 aa)). Positions 31–119 (PFCIRDFVEA…MRNVEVNIES (89 aa)) constitute a GOLD domain. Residues 179–199 (NFSMAVIVVFAALCAWQLNYL) form a helical membrane-spanning segment. The Cytoplasmic segment spans residues 200 to 209 (KNYFRAKHII).

Belongs to the EMP24/GP25L family.

Its subcellular location is the endoplasmic reticulum membrane. The protein resides in the golgi apparatus membrane. Constituent of COPII-coated endoplasmic reticulum-derived transport vesicles. Required for efficient transport of a subset of secretory proteins to the Golgi. Facilitates retrograde transport from the Golgi to the endoplasmic reticulum. This chain is Endoplasmic reticulum vesicle protein 25 (ERV25), found in Eremothecium gossypii (strain ATCC 10895 / CBS 109.51 / FGSC 9923 / NRRL Y-1056) (Yeast).